The sequence spans 371 residues: 3-isopropylmalate dehydrogenase (371 aa).

Substrate is bound by residues Arg-104, Arg-114, Arg-142, and Asp-232. Residues Asp-232, Asp-256, and Asp-260 each contribute to the Mg(2+) site. 290-302 (GSAPDIAGQDKAN) is a binding site for NAD(+).

The protein belongs to the isocitrate and isopropylmalate dehydrogenases family. LeuB type 1 subfamily. Homodimer. Mg(2+) serves as cofactor. The cofactor is Mn(2+).

It is found in the cytoplasm. It catalyses the reaction (2R,3S)-3-isopropylmalate + NAD(+) = 4-methyl-2-oxopentanoate + CO2 + NADH. Its pathway is amino-acid biosynthesis; L-leucine biosynthesis; L-leucine from 3-methyl-2-oxobutanoate: step 3/4. Catalyzes the oxidation of 3-carboxy-2-hydroxy-4-methylpentanoate (3-isopropylmalate) to 3-carboxy-4-methyl-2-oxopentanoate. The product decarboxylates to 4-methyl-2 oxopentanoate. This is 3-isopropylmalate dehydrogenase from Synechococcus sp. (strain JA-2-3B'a(2-13)) (Cyanobacteria bacterium Yellowstone B-Prime).